The sequence spans 341 residues: Glyceraldehyde-3-phosphate dehydrogenase 2 (341 aa).

Residues 12–13 (RI), Arg-78, and Thr-120 each bind NAD(+). D-glyceraldehyde 3-phosphate contacts are provided by residues 152–154 (SCT) and Thr-183. Cys-153 functions as the Nucleophile in the catalytic mechanism. Asn-184 serves as a coordination point for NAD(+). Residues Arg-198, 211-212 (TG), and Arg-234 contribute to the D-glyceraldehyde 3-phosphate site. NAD(+) is bound at residue Asn-313.

It belongs to the glyceraldehyde-3-phosphate dehydrogenase family. As to quaternary structure, homotetramer.

The protein resides in the cytoplasm. The enzyme catalyses D-glyceraldehyde 3-phosphate + phosphate + NAD(+) = (2R)-3-phospho-glyceroyl phosphate + NADH + H(+). It participates in carbohydrate degradation; glycolysis; pyruvate from D-glyceraldehyde 3-phosphate: step 1/5. Its function is as follows. Catalyzes the oxidative phosphorylation of glyceraldehyde 3-phosphate (G3P) to 1,3-bisphosphoglycerate (BPG) using the cofactor NAD. The first reaction step involves the formation of a hemiacetal intermediate between G3P and a cysteine residue, and this hemiacetal intermediate is then oxidized to a thioester, with concomitant reduction of NAD to NADH. The reduced NADH is then exchanged with the second NAD, and the thioester is attacked by a nucleophilic inorganic phosphate to produce BPG. The chain is Glyceraldehyde-3-phosphate dehydrogenase 2 (gapA2) from Staphylococcus aureus (strain MRSA252).